Here is a 370-residue protein sequence, read N- to C-terminus: Probable aspartic-type endopeptidase ARB_04018 (370 aa).

Residues 1–21 form the signal peptide; that stretch reads MWHSPFSTAFTLFLGFFTLTL. N-linked (GlcNAc...) asparagine glycans are attached at residues Asn80 and Asn102. Residues 94–367 enclose the Peptidase A1 domain; the sequence is FVNEITIGND…DHDGPKMGFA (274 aa). Residue Asp110 is part of the active site. Asn251 carries an N-linked (GlcNAc...) asparagine glycan. Asp261 is a catalytic residue. An N-linked (GlcNAc...) asparagine glycan is attached at Asn298.

It belongs to the peptidase A1 family.

The protein localises to the secreted. In terms of biological role, probable aspartic-type endopeptidase which contributes to virulence. The polypeptide is Probable aspartic-type endopeptidase ARB_04018 (Arthroderma benhamiae (strain ATCC MYA-4681 / CBS 112371) (Trichophyton mentagrophytes)).